The following is a 459-amino-acid chain: Putative BTB/POZ domain-containing protein R541 (459 aa).

In terms of domain architecture, BTB spans 76–143 (NHITINVGGK…NQKSTNIELY (68 aa)).

It belongs to the mimivirus BTB/WD family.

This Acanthamoeba polyphaga mimivirus (APMV) protein is Putative BTB/POZ domain-containing protein R541.